A 165-amino-acid polypeptide reads, in one-letter code: Peptide methionine sulfoxide reductase MsrA (165 aa).

Cysteine 11 is an active-site residue.

This sequence belongs to the MsrA Met sulfoxide reductase family.

It carries out the reaction L-methionyl-[protein] + [thioredoxin]-disulfide + H2O = L-methionyl-(S)-S-oxide-[protein] + [thioredoxin]-dithiol. The enzyme catalyses [thioredoxin]-disulfide + L-methionine + H2O = L-methionine (S)-S-oxide + [thioredoxin]-dithiol. Has an important function as a repair enzyme for proteins that have been inactivated by oxidation. Catalyzes the reversible oxidation-reduction of methionine sulfoxide in proteins to methionine. The sequence is that of Peptide methionine sulfoxide reductase MsrA from Ureaplasma parvum serovar 3 (strain ATCC 27815 / 27 / NCTC 11736).